The following is a 394-amino-acid chain: Xylose isomerase (394 aa).

Active-site residues include H54 and D57. 7 residues coordinate Mg(2+): E180, E216, H219, D244, D254, D256, and D285. A disordered region spans residues 370 to 394 (VRTPRPAGDGPPAGRARLTVAPRKR). The segment covering 373–386 (PRPAGDGPPAGRAR) has biased composition (low complexity).

This sequence belongs to the xylose isomerase family. Homotetramer. The cofactor is Mg(2+).

It is found in the cytoplasm. The catalysed reaction is alpha-D-xylose = alpha-D-xylulofuranose. Involved in D-xylose catabolism. The chain is Xylose isomerase (xylA) from Streptomyces rochei (Streptomyces parvullus).